A 310-amino-acid chain; its full sequence is MLDANKLQQAVDQAYTQFHSLNGGQNADYIPFLANVPGQLAAVAIVTSDGNVYSAGDSDYRFALESISKVCTLALALEDVGPQAVQDKVGADPTGLPFNSVIALELHGGKPLSPLVNAGAIATTSLINAENTEQRWQRILHIQQQLAGEQVALSDEVNQSEQTTNFHNRAIAWLLYSAGYLYCDAMEACDVYTRQCSTLINTIELATLGATLAAGGVNPLTHKRVLQADNVPYILAEMMMEGLYGRSGDWAYRVGLPGKSGVGGGILAVVPGVMGIAAFSPPLDEEGNSVRGQKMVASVAKQLGYNVFKG.

Substrate-binding residues include Ser66, Asn117, Glu161, Asn168, Tyr192, Tyr244, and Val262. Lys294 carries the N6-acetyllysine modification.

It belongs to the glutaminase family. In terms of assembly, homotetramer.

The catalysed reaction is L-glutamine + H2O = L-glutamate + NH4(+). The chain is Glutaminase 1 from Escherichia coli O6:H1 (strain CFT073 / ATCC 700928 / UPEC).